The sequence spans 562 residues: Thermosome subunit alpha (562 aa).

2 disordered regions span residues 1–23 and 526–551; these read MAQQ…TSGE and GGQV…GMGG. Over residues 537–551 the composition is skewed to gly residues; sequence GPAGGPGGMGGGMGG.

The protein belongs to the TCP-1 chaperonin family. As to quaternary structure, forms an oligomeric complex of eight-membered rings.

Molecular chaperone; binds unfolded polypeptides in vitro, and has a weak ATPase activity. In Halobacterium salinarum (strain ATCC 700922 / JCM 11081 / NRC-1) (Halobacterium halobium), this protein is Thermosome subunit alpha (thsA).